The primary structure comprises 20 residues: HQKYNPFRFVELVLVVDKAM.

It belongs to the venom metalloproteinase (M12B) family. P-III subfamily. Monomer. Requires Zn(2+) as cofactor. In terms of tissue distribution, expressed by the venom gland.

The protein resides in the secreted. Its activity is regulated as follows. Inhibited by ethylenediaminetetraacetic acid (EDTA) and 1,10-phenanthroline. Not inhibited by tosyl-L-lysine chloromethyl ketone (TCLK) and phenylmethanesulfonylfluoride (PMSF). In terms of biological role, snake venom zinc metalloprotease that possesses hemorrhagic activity (minimum hemorrhagic dose, MHD=4.7 ug) when injected intradermally into mice. Degrades the alpha-chain of fibrinogen (FGA). The protein is Zinc metalloproteinase-disintegrin-like uracoina-1 of Crotalus vegrandis (Uracoan rattlesnake).